A 213-amino-acid polypeptide reads, in one-letter code: Ras-related protein Rab-25 (213 aa).

GTP is bound by residues serine 21, glycine 24, lysine 25, threonine 26, asparagine 27, serine 38, histidine 39, threonine 43, and threonine 44. Threonine 26 is a binding site for Mg(2+). 2 short sequence motifs (switch) span residues 35 to 49 (NEFSHDSRTTIGVEF) and 67 to 84 (DTAGLERYRAITSAYYRG). 2 residues coordinate Mg(2+): threonine 44 and aspartate 67. GTP is bound by residues glycine 70, asparagine 125, lysine 126, aspartate 128, alanine 156, and leucine 157. S-geranylgeranyl cysteine attachment occurs at residues cysteine 209 and cysteine 210. Cysteine 210 carries the cysteine methyl ester modification. The propeptide at 211–213 (INL) is removed in mature form.

Belongs to the small GTPase superfamily. Rab family. In terms of assembly, interacts (GTP-bound form) with RAB11FIP1, RAB11FIP2, RAB11FIP3 and RAB11FIP4. Interacts (via the hypervariable C-terminal region) with ITGB1 (via the cytoplasmic region); the interaction is GTP-dependent. Interacts with ITGAV. Associates with the integrin alpha-V/beta-1 heterodimer. Interacts with VPS33B. It depends on Mg(2+) as a cofactor. Expression is restricted to epithelial cells. Expressed in the gastrointestinal mucosa, (highest expression seen in the ileum and colon), kidney, and lung. A very minor and variable level of expression is seen in the splenic tissue.

The protein localises to the cell membrane. It localises to the cell projection. Its subcellular location is the pseudopodium membrane. It is found in the cytoplasmic vesicle. The enzyme catalyses GTP + H2O = GDP + phosphate + H(+). With respect to regulation, regulated by guanine nucleotide exchange factors (GEFs) which promote the exchange of bound GDP for free GTP. Regulated by GTPase activating proteins (GAPs) which increase the GTP hydrolysis activity. Inhibited by GDP dissociation inhibitors (GDIs) which prevent Rab-GDP dissociation. Its function is as follows. The small GTPases Rab are key regulators of intracellular membrane trafficking, from the formation of transport vesicles to their fusion with membranes. Rabs cycle between an inactive GDP-bound form and an active GTP-bound form that is able to recruit to membranes different set of downstream effectors directly responsible for vesicle formation, movement, tethering and fusion. RAB25 regulates epithelial cell differentiation, proliferation and survival, thereby playing key roles in tumorigenesis. Promotes invasive migration of cells in which it functions to localize and maintain integrin alpha-V/beta-1 at the tips of extending pseudopodia. Involved in the regulation of epithelial morphogenesis through the control of CLDN4 expression and localization at tight junctions. May selectively regulate the apical recycling pathway. Together with MYO5B regulates transcytosis. The protein is Ras-related protein Rab-25 (RAB25) of Oryctolagus cuniculus (Rabbit).